The primary structure comprises 426 residues: Coiled-coil domain-containing protein 86 (426 aa).

The disordered stretch occupies residues 1 to 426 (MDTPLRRSRR…QPPQRPVAKV (426 aa)). Ser18 bears the Phosphoserine mark. A compositionally biased stretch (basic and acidic residues) spans 33–49 (ALVDFKSNSEETGELKS). A compositionally biased stretch (pro residues) spans 55-145 (LSLPSPGPQP…SLPSPGPQPE (91 aa)). Ser59 carries the phosphoserine modification. Phosphothreonine is present on Thr66. Phosphoserine occurs at positions 67, 70, 161, 172, 183, 191, 194, 225, 252, 253, and 283. The segment covering 241–255 (QPAQELTVQAPSSPE) has biased composition (polar residues). Residues 304-320 (GKPKSGRVWKDRSKKRF) are compositionally biased toward basic residues. Over residues 339-383 (ERQERKLAKDFARHLEEEKQRRRQEKKERRAENLRRRLENERKAE) the composition is skewed to basic and acidic residues. A coiled-coil region spans residues 346–389 (AKDFARHLEEEKQRRRQEKKERRAENLRRRLENERKAEIVQVIR). The segment covering 392-402 (AKLKKAKKKQL) has biased composition (basic residues). Arg408 carries the post-translational modification Citrulline.

Citrullinated by PADI4. In terms of tissue distribution, highly expressed in testis. Also expressed in heart, liver, kidney.

It is found in the nucleus. The protein localises to the chromosome. The protein resides in the nucleolus. Its function is as follows. Required for proper chromosome segregation during mitosis and error-free mitotic progression. This is Coiled-coil domain-containing protein 86 from Mus musculus (Mouse).